A 572-amino-acid chain; its full sequence is NADH-ubiquinone oxidoreductase chain 5 (572 aa).

The next 16 helical transmembrane spans lie at I4–L24, I44–I64, I86–I106, S107–Q127, V147–Y167, I170–T190, S217–T237, W239–A259, I268–F288, F294–I314, S337–Y357, N372–V394, M422–F442, L457–F477, F490–L510, and L552–L572.

Belongs to the complex I subunit 5 family.

It localises to the mitochondrion inner membrane. It carries out the reaction a ubiquinone + NADH + 5 H(+)(in) = a ubiquinol + NAD(+) + 4 H(+)(out). In terms of biological role, core subunit of the mitochondrial membrane respiratory chain NADH dehydrogenase (Complex I) that is believed to belong to the minimal assembly required for catalysis. Complex I functions in the transfer of electrons from NADH to the respiratory chain. The immediate electron acceptor for the enzyme is believed to be ubiquinone. This Drosophila melanogaster (Fruit fly) protein is NADH-ubiquinone oxidoreductase chain 5 (mt:ND5).